The chain runs to 166 residues: RNA pyrophosphohydrolase (166 aa).

Residues 6 to 149 form the Nudix hydrolase domain; that stretch reads GFRPNVGIIL…KRDVYRKAMM (144 aa). The Nudix box motif lies at 38 to 59; sequence GGIHFGETPEQALYRELREEVG.

The protein belongs to the Nudix hydrolase family. RppH subfamily. A divalent metal cation serves as cofactor.

Accelerates the degradation of transcripts by removing pyrophosphate from the 5'-end of triphosphorylated RNA, leading to a more labile monophosphorylated state that can stimulate subsequent ribonuclease cleavage. In Acinetobacter baylyi (strain ATCC 33305 / BD413 / ADP1), this protein is RNA pyrophosphohydrolase.